The following is an 845-amino-acid chain: MSKSFQQSSLGRDSQGHGRDLSAAGIGLLAAATQSLSMPASLGRMNQGTARLASLMNLGMSSSLNQQGAHSALSSASTSSHNLQSIFNIGSRGPLPLSSQHRGDTDQASNILASFGLSARDLDELSRYPEDKITPENLPQILLQLKRRRTEEGPTLSYGRDGRSATREPPYRVPRDDWEEKRHFRRDSFDDRGPSLNPVLDYDHGSRSQESGYYDRMDYEDDRLRDGERCRDDSFFGETSHNYHKFDSEYERMGRGPGPLQERSLFEKKRGAPPSSNIEDFHGLLPKGYPHLCSICDLPVHSNKEWSQHINGASHSRRCQLLLEIYPEWNPDNDTGHTMGDPFMLQQSTNPAPGILGPPPPSFHLGGPAVGPRGNLGAGNGNLQGPRHMQKGRVETSRVVHIMDFQRGKNLRYQLLQLVEPFGVISNHLILNKINEAFIEMATTEDAQAAVDYYTTTPALVFGKPVRVHLSQKYKRIKKPEGKPDEKFDQKQELGRVIHLSNLPHSGYSDSAVLKLAEPYGKIKNYILMRMKSQAFIEMETREDAMAMVDHCLKKALWFQGRCVKVDLSEKYKKLVLRIPNRGIDLLKKDKSRKRSYSPDGKESPSDKKSKTDGAQKTENPAEGKEQEEKSGEDGEKDTKDDQTEQEPSMLLESEDELLVDEEEAAALIESGSSVGDETDLANLGDVSSDGKKEPSDKAVKKDASATSKKKLKKVDKIEELDQENEAALENGIKNEENTEPGAESAENADDPNKDASDNSDGQNDENKEDYTIPDEYRIGPYQPNVPGGIDYVIPKTGFYCKLCSLFYTNEEVAKNTHCSSLPHYQKLKKFLNKLAEERRQKKES.

An N-acetylserine modification is found at S2. An N6-acetyllysine; alternate modification is found at K3. Residue K3 forms a Glycyl lysine isopeptide (Lys-Gly) (interchain with G-Cter in SUMO2); alternate linkage. Phosphoserine is present on residues S4, S9, S14, S22, S41, S118, and S126. Glycyl lysine isopeptide (Lys-Gly) (interchain with G-Cter in SUMO2) cross-links involve residues K132 and K146. Disordered regions lie at residues 147–174 and 187–213; these read RRRT…YRVP and DSFD…ESGY. T150 carries the phosphothreonine modification. Position 157 is a phosphoserine (S157). Y158 carries the post-translational modification Phosphotyrosine. Residues 160 to 174 show a composition bias toward basic and acidic residues; the sequence is RDGRSATREPPYRVP. S164, S188, and S195 each carry phosphoserine. The span at 201–213 shows a compositional bias: basic and acidic residues; it reads DYDHGSRSQESGY. At Y202 the chain carries Phosphotyrosine. Residues S206, S208, and S211 each carry the phosphoserine modification. The residue at position 219 (Y219) is a Phosphotyrosine. A Phosphoserine modification is found at S234. A Glycyl lysine isopeptide (Lys-Gly) (interchain with G-Cter in SUMO2) cross-link involves residue K245. S264 is subject to Phosphoserine. Residue K269 forms a Glycyl lysine isopeptide (Lys-Gly) (interchain with G-Cter in SUMO2) linkage. At S275 the chain carries Phosphoserine. The segment at 342–394 is disordered; it reads PFMLQQSTNPAPGILGPPPPSFHLGGPAVGPRGNLGAGNGNLQGPRHMQKGRV. Residues 398-473 enclose the RRM 1 domain; that stretch reads RVVHIMDFQR…KPVRVHLSQK (76 aa). Residues K478, K487, and K491 each participate in a glycyl lysine isopeptide (Lys-Gly) (interchain with G-Cter in SUMO2) cross-link. The region spanning 496–571 is the RRM 2 domain; sequence RVIHLSNLPH…RCVKVDLSEK (76 aa). Residues S509 and S511 each carry the phosphoserine modification. Residue K515 forms a Glycyl lysine isopeptide (Lys-Gly) (interchain with G-Cter in SUMO2) linkage. N6-acetyllysine; alternate is present on K522. A Glycyl lysine isopeptide (Lys-Gly) (interchain with G-Cter in SUMO2); alternate cross-link involves residue K522. S533 is modified (phosphoserine). Glycyl lysine isopeptide (Lys-Gly) (interchain with G-Cter in SUMO2) cross-links involve residues K554 and K555. An N6-acetyllysine modification is found at K571. Residues 588-785 form a disordered region; that stretch reads KKDKSRKRSY…EYRIGPYQPN (198 aa). 4 positions are modified to phosphoserine: S596, S598, S604, and S606. Positions 600 to 643 are enriched in basic and acidic residues; that stretch reads DGKESPSDKKSKTDGAQKTENPAEGKEQEEKSGEDGEKDTKDDQ. Residues K617 and K630 each participate in a glycyl lysine isopeptide (Lys-Gly) (interchain with G-Cter in SUMO2) cross-link. The segment covering 653–665 has biased composition (acidic residues); that stretch reads ESEDELLVDEEEA. 4 positions are modified to phosphoserine: S654, S671, S673, and S674. A Phosphothreonine modification is found at T679. Phosphoserine is present on S689. The segment covering 689–704 has biased composition (basic and acidic residues); the sequence is SDGKKEPSDKAVKKDA. A Nuclear localization signal motif is present at residues 708 to 716; the sequence is SKKKLKKVD. Glycyl lysine isopeptide (Lys-Gly) (interchain with G-Cter in SUMO2) cross-links involve residues K717 and K734. The residue at position 739 (T739) is a Phosphothreonine. Residues S745, S757, and S760 each carry the phosphoserine modification. Residues 765-778 show a composition bias toward basic and acidic residues; it reads DENKEDYTIPDEYR. K768 is covalently cross-linked (Glycyl lysine isopeptide (Lys-Gly) (interchain with G-Cter in SUMO2)). The Matrin-type zinc finger occupies 799–830; it reads FYCKLCSLFYTNEEVAKNTHCSSLPHYQKLKK. K834 is modified (N6-acetyllysine; alternate). A Glycyl lysine isopeptide (Lys-Gly) (interchain with G-Cter in SUMO2); alternate cross-link involves residue K834.

Part of a complex consisting of SFPQ, NONO and MATR3. Interacts with AGO1 and AGO2. Part of a complex composed at least of ASH2L, EMSY, HCFC1, HSPA8, CCAR2, MATR3, MKI67, RBBP5, TUBB2A, WDR5 and ZNF335; this complex may have a histone H3-specific methyltransferase activity. Interacts with TARDBP. Part of the HDP-RNP complex composed of at least HEXIM1, PRKDC, XRCC5, XRCC6, paraspeckle proteins (SFPQ, NONO, PSPC1, RBM14, and MATR3) and NEAT1 RNA. Interacts with FUS. Interacts with IGF2BP1. Interacts with IGF2BP2 and IGF2BP3. Interacts with RBPMS.

The protein resides in the nucleus matrix. In terms of biological role, may play a role in transcription or may interact with other nuclear matrix proteins to form the internal fibrogranular network. In association with the SFPQ-NONO heteromer may play a role in nuclear retention of defective RNAs. Plays a role in the regulation of DNA virus-mediated innate immune response by assembling into the HDP-RNP complex, a complex that serves as a platform for IRF3 phosphorylation and subsequent innate immune response activation through the cGAS-STING pathway. Binds to N6-methyladenosine (m6A)-containing mRNAs and contributes to MYC stability by binding to m6A-containing MYC mRNAs. May bind to specific miRNA hairpins. This chain is Matrin-3 (Matr3), found in Rattus norvegicus (Rat).